The primary structure comprises 591 residues: L-fucose isomerase (591 aa).

Catalysis depends on proton acceptor residues glutamate 337 and aspartate 361. Glutamate 337, aspartate 361, and histidine 528 together coordinate Mn(2+).

Belongs to the L-fucose isomerase family. In terms of assembly, homohexamer. Mn(2+) serves as cofactor.

The protein localises to the cytoplasm. The enzyme catalyses L-fucose = L-fuculose. The protein operates within carbohydrate degradation; L-fucose degradation; L-lactaldehyde and glycerone phosphate from L-fucose: step 1/3. In terms of biological role, converts the aldose L-fucose into the corresponding ketose L-fuculose. This Salmonella schwarzengrund (strain CVM19633) protein is L-fucose isomerase.